We begin with the raw amino-acid sequence, 238 residues long: 2-C-methyl-D-erythritol 4-phosphate cytidylyltransferase (238 aa).

This sequence belongs to the IspD/TarI cytidylyltransferase family. IspD subfamily.

The enzyme catalyses 2-C-methyl-D-erythritol 4-phosphate + CTP + H(+) = 4-CDP-2-C-methyl-D-erythritol + diphosphate. Its pathway is isoprenoid biosynthesis; isopentenyl diphosphate biosynthesis via DXP pathway; isopentenyl diphosphate from 1-deoxy-D-xylulose 5-phosphate: step 2/6. Catalyzes the formation of 4-diphosphocytidyl-2-C-methyl-D-erythritol from CTP and 2-C-methyl-D-erythritol 4-phosphate (MEP). This is 2-C-methyl-D-erythritol 4-phosphate cytidylyltransferase from Shewanella amazonensis (strain ATCC BAA-1098 / SB2B).